Reading from the N-terminus, the 525-residue chain is Probable pectinesterase/pectinesterase inhibitor 44 (525 aa).

Positions Met-1–Ser-19 are cleaved as a signal peptide. Residues Val-30–Leu-153 form a pectinesterase inhibitor 44 region. Asn-98 carries N-linked (GlcNAc...) asparagine glycosylation. The disordered stretch occupies residues Glu-157–Phe-192. Positions Asp-212 to Asn-509 are pectinesterase 44. N-linked (GlcNAc...) asparagine glycosylation is found at Asn-222 and Asn-278. The substrate site is built by Thr-287 and Gln-317. Asp-340 acts as the Proton donor; for pectinesterase activity in catalysis. Cys-354 and Cys-374 are oxidised to a cystine. Catalysis depends on Asp-361, which acts as the Nucleophile; for pectinesterase activity. 2 N-linked (GlcNAc...) asparagine glycosylation sites follow: Asn-409 and Asn-421. Substrate-binding residues include Arg-429 and Trp-431. N-linked (GlcNAc...) asparagine glycosylation is found at Asn-443, Asn-492, and Asn-499.

This sequence in the N-terminal section; belongs to the PMEI family. It in the C-terminal section; belongs to the pectinesterase family. As to expression, expressed in siliques.

The protein localises to the secreted. Its subcellular location is the cell wall. The enzyme catalyses [(1-&gt;4)-alpha-D-galacturonosyl methyl ester](n) + n H2O = [(1-&gt;4)-alpha-D-galacturonosyl](n) + n methanol + n H(+). It participates in glycan metabolism; pectin degradation; 2-dehydro-3-deoxy-D-gluconate from pectin: step 1/5. Its function is as follows. Acts in the modification of cell walls via demethylesterification of cell wall pectin. The polypeptide is Probable pectinesterase/pectinesterase inhibitor 44 (PME44) (Arabidopsis thaliana (Mouse-ear cress)).